Here is a 417-residue protein sequence, read N- to C-terminus: Serine hydroxymethyltransferase (417 aa).

(6S)-5,6,7,8-tetrahydrofolate contacts are provided by residues leucine 121 and 125–127 (GHL). N6-(pyridoxal phosphate)lysine is present on lysine 229. Residue 355–357 (SPF) coordinates (6S)-5,6,7,8-tetrahydrofolate.

This sequence belongs to the SHMT family. In terms of assembly, homodimer. The cofactor is pyridoxal 5'-phosphate.

The protein localises to the cytoplasm. The enzyme catalyses (6R)-5,10-methylene-5,6,7,8-tetrahydrofolate + glycine + H2O = (6S)-5,6,7,8-tetrahydrofolate + L-serine. It functions in the pathway one-carbon metabolism; tetrahydrofolate interconversion. It participates in amino-acid biosynthesis; glycine biosynthesis; glycine from L-serine: step 1/1. Its function is as follows. Catalyzes the reversible interconversion of serine and glycine with tetrahydrofolate (THF) serving as the one-carbon carrier. This reaction serves as the major source of one-carbon groups required for the biosynthesis of purines, thymidylate, methionine, and other important biomolecules. Also exhibits THF-independent aldolase activity toward beta-hydroxyamino acids, producing glycine and aldehydes, via a retro-aldol mechanism. The chain is Serine hydroxymethyltransferase from Salmonella arizonae (strain ATCC BAA-731 / CDC346-86 / RSK2980).